A 255-amino-acid chain; its full sequence is Aliphatic sulfonates import ATP-binding protein SsuB (255 aa).

The ABC transporter domain occupies 12 to 233; the sequence is LLLNAVSKHY…RLGSVRLAEL (222 aa). 44 to 51 lines the ATP pocket; sequence GRSGGGKS.

Belongs to the ABC transporter superfamily. Aliphatic sulfonates importer (TC 3.A.1.17.2) family. The complex is composed of two ATP-binding proteins (SsuB), two transmembrane proteins (SsuC) and a solute-binding protein (SsuA).

It is found in the cell inner membrane. The enzyme catalyses ATP + H2O + aliphatic sulfonate-[sulfonate-binding protein]Side 1 = ADP + phosphate + aliphatic sulfonateSide 2 + [sulfonate-binding protein]Side 1.. In terms of biological role, part of the ABC transporter complex SsuABC involved in aliphatic sulfonates import. Responsible for energy coupling to the transport system. This chain is Aliphatic sulfonates import ATP-binding protein SsuB, found in Escherichia coli O6:K15:H31 (strain 536 / UPEC).